Here is a 380-residue protein sequence, read N- to C-terminus: Cell division protein FtsZ 2 (380 aa).

GTP is bound by residues glycine 47–asparagine 51, glycine 134–glycine 136, glutamate 165, arginine 168, and aspartate 211.

The protein belongs to the FtsZ family. In terms of assembly, homodimer. Polymerizes to form a dynamic ring structure in a strictly GTP-dependent manner. Interacts directly with several other division proteins.

The protein resides in the cytoplasm. In terms of biological role, essential cell division protein that forms a contractile ring structure (Z ring) at the future cell division site. The regulation of the ring assembly controls the timing and the location of cell division. One of the functions of the FtsZ ring is to recruit other cell division proteins to the septum to produce a new cell wall between the dividing cells. Binds GTP and shows GTPase activity. The sequence is that of Cell division protein FtsZ 2 from Methanocaldococcus jannaschii (strain ATCC 43067 / DSM 2661 / JAL-1 / JCM 10045 / NBRC 100440) (Methanococcus jannaschii).